We begin with the raw amino-acid sequence, 461 residues long: Cysteine--tRNA ligase (461 aa).

Cysteine 28 serves as a coordination point for Zn(2+). The 'HIGH' region motif lies at 30–40; the sequence is VTIYDLCHIGH. Residues cysteine 209, histidine 234, and glutamate 238 each contribute to the Zn(2+) site. Residues 266-270 carry the 'KMSKS' region motif; the sequence is KMSKS. Lysine 269 serves as a coordination point for ATP.

The protein belongs to the class-I aminoacyl-tRNA synthetase family. Monomer. Requires Zn(2+) as cofactor.

The protein localises to the cytoplasm. It catalyses the reaction tRNA(Cys) + L-cysteine + ATP = L-cysteinyl-tRNA(Cys) + AMP + diphosphate. The chain is Cysteine--tRNA ligase from Vibrio atlanticus (strain LGP32) (Vibrio splendidus (strain Mel32)).